The chain runs to 553 residues: Terpene synthase 16 (553 aa).

Mg(2+) is bound by residues Asp303, Asp307, and Glu457. Residues Asp303–Asp307 carry the DDXXD motif motif.

It belongs to the terpene synthase family. Tpsa subfamily. Mg(2+) serves as cofactor. Requires Mn(2+) as cofactor. Expressed in leaves, trichomes and flowers.

Its pathway is secondary metabolite biosynthesis; terpenoid biosynthesis. Functionally, sesquiterpene synthase involved in the biosynthesis of volatile compounds. No activity detected with geranyl diphosphate (GPP) and farnesyl diphosphate (FPP) as substrates. The sequence is that of Terpene synthase 16 from Solanum lycopersicum (Tomato).